Here is a 118-residue protein sequence, read N- to C-terminus: Ig heavy chain V region X24 (118 aa).

Positions 1–111 (EVKLLESGGG…GYFDYWGQGT (111 aa)) constitute an Ig-like domain.

The protein is Ig heavy chain V region X24 of Mus musculus (Mouse).